Reading from the N-terminus, the 598-residue chain is Nicotinamide riboside transporter 1 (598 aa).

A run of 11 helical transmembrane segments spans residues 48–68 (LAYWGAVSFTAGTWMSGSAAL), 71–91 (GLSYPETIVSFLLGNVLTIIF), 112–132 (FVFGIYGSAFGIIIRILMSIV), 174–194 (LVGFIIFHVLTALCYFMKPYH), 197–217 (YLLIWSCVATCFAMLGIVIYL), 241–261 (AWAWVYMISYWFGSISPGSTN), 273–293 (LAIWTGSVCALLIPATLVPIF), 372–392 (GALFCACISWACLPWNFYNSS), 395–415 (FLTVMSSFGVVMTPIIAVMIC), 447–467 (AIVAWVCGMAPGLPGIAWEVN), and 484–504 (SFFSFLISFFVYWGLCVFFPF). 2 positions are modified to phosphoserine: Ser560 and Ser572.

This sequence belongs to the purine-cytosine permease (2.A.39) family.

The protein localises to the cell membrane. In terms of biological role, high-affinity pH-dependent nicotinamide riboside transporter which also transports thiamine with low affinity. Involved in 5-fluorocytosine sensitivity. This Saccharomyces cerevisiae (strain ATCC 204508 / S288c) (Baker's yeast) protein is Nicotinamide riboside transporter 1 (NRT1).